The chain runs to 554 residues: Arginine--tRNA ligase (554 aa).

The short motif at 130-140 (ANPTGDLHIGH) is the 'HIGH' region element.

This sequence belongs to the class-I aminoacyl-tRNA synthetase family. Monomer.

The protein localises to the cytoplasm. It catalyses the reaction tRNA(Arg) + L-arginine + ATP = L-arginyl-tRNA(Arg) + AMP + diphosphate. The protein is Arginine--tRNA ligase of Staphylococcus carnosus (strain TM300).